A 600-amino-acid polypeptide reads, in one-letter code: UvrABC system protein C (600 aa).

Residues 15-100 (NSAGVYEYFN…IKQLHPKYNI (86 aa)) enclose the GIY-YIG domain. Residues 203 to 238 (SVLLKNLEKQMLVLAQNENYEEAAKIRDQIATIKDL) form the UVR domain.

Belongs to the UvrC family. Interacts with UvrB in an incision complex.

It localises to the cytoplasm. The UvrABC repair system catalyzes the recognition and processing of DNA lesions. UvrC both incises the 5' and 3' sides of the lesion. The N-terminal half is responsible for the 3' incision and the C-terminal half is responsible for the 5' incision. This Campylobacter jejuni subsp. doylei (strain ATCC BAA-1458 / RM4099 / 269.97) protein is UvrABC system protein C.